A 490-amino-acid chain; its full sequence is Dual specificity protein kinase CLK3 (490 aa).

Positions 1 to 138 (MHHCKRYRSP…SKRSSRSVED (138 aa)) are disordered. Residue Tyr-7 is modified to Phosphotyrosine. Phosphoserine is present on residues Ser-9, Ser-49, Ser-51, Ser-67, Ser-76, and Ser-78. Composition is skewed to basic and acidic residues over residues 26-56 (YSRE…DRLP) and 63-76 (ERRD…EERS). Residues 88 to 116 (RSRHRRRSRERGPYRTRKHAHHCHKRRTR) are compositionally biased toward basic residues. Low complexity predominate over residues 117-130 (SCSSASSRSQQSSK). Ser-135 bears the Phosphoserine mark. One can recognise a Protein kinase domain in the interval 156-472 (YEIVGNLGEG…LAEALLHPFF (317 aa)). ATP-binding positions include 162-170 (LGEGTFGKV) and Lys-186. The active-site Proton acceptor is Asp-283.

The protein belongs to the protein kinase superfamily. CMGC Ser/Thr protein kinase family. Lammer subfamily. In terms of processing, autophosphorylates on all three types of residues. As to expression, endothelial cells.

Its subcellular location is the nucleus. The protein resides in the cytoplasm. It localises to the cytoplasmic vesicle. It is found in the secretory vesicle. The protein localises to the acrosome. Its subcellular location is the nucleus speckle. It catalyses the reaction L-seryl-[protein] + ATP = O-phospho-L-seryl-[protein] + ADP + H(+). The catalysed reaction is L-threonyl-[protein] + ATP = O-phospho-L-threonyl-[protein] + ADP + H(+). The enzyme catalyses L-tyrosyl-[protein] + ATP = O-phospho-L-tyrosyl-[protein] + ADP + H(+). Its activity is regulated as follows. Leucettine L41 inhibits its kinase activity and affects the regulation of alternative splicing mediated by phosphorylation of SR proteins. Its function is as follows. Dual specificity kinase acting on both serine/threonine and tyrosine-containing substrates. Phosphorylates serine- and arginine-rich (SR) proteins of the spliceosomal complex. May be a constituent of a network of regulatory mechanisms that enable SR proteins to control RNA splicing and can cause redistribution of SR proteins from speckles to a diffuse nucleoplasmic distribution. Phosphorylates SRSF1 and SRSF3. Regulates the alternative splicing of tissue factor (F3) pre-mRNA in endothelial cells. The sequence is that of Dual specificity protein kinase CLK3 from Homo sapiens (Human).